Consider the following 304-residue polypeptide: Acetaldehyde dehydrogenase 4 (304 aa).

C131 acts as the Acyl-thioester intermediate in catalysis. NAD(+) contacts are provided by residues 162–170 and N273; that span reads SAGPGTRKN.

This sequence belongs to the acetaldehyde dehydrogenase family.

It carries out the reaction acetaldehyde + NAD(+) + CoA = acetyl-CoA + NADH + H(+). In Dechloromonas aromatica (strain RCB), this protein is Acetaldehyde dehydrogenase 4.